The primary structure comprises 376 residues: Protein-glutamate methylesterase/protein-glutamine glutaminase (376 aa).

In terms of domain architecture, Response regulatory spans lysine 4–leucine 121. Aspartate 55 carries the 4-aspartylphosphate modification. The segment at serine 142–serine 161 is disordered. Positions serine 145–serine 161 are enriched in low complexity. Residues threonine 183–lysine 376 form the CheB-type methylesterase domain. Active-site residues include serine 195, histidine 222, and aspartate 318.

Belongs to the CheB family. In terms of processing, phosphorylated by CheA. Phosphorylation of the N-terminal regulatory domain activates the methylesterase activity.

It localises to the cytoplasm. It carries out the reaction [protein]-L-glutamate 5-O-methyl ester + H2O = L-glutamyl-[protein] + methanol + H(+). It catalyses the reaction L-glutaminyl-[protein] + H2O = L-glutamyl-[protein] + NH4(+). Involved in chemotaxis. Part of a chemotaxis signal transduction system that modulates chemotaxis in response to various stimuli. Catalyzes the demethylation of specific methylglutamate residues introduced into the chemoreceptors (methyl-accepting chemotaxis proteins or MCP) by CheR. Also mediates the irreversible deamidation of specific glutamine residues to glutamic acid. The sequence is that of Protein-glutamate methylesterase/protein-glutamine glutaminase from Aliivibrio fischeri (strain ATCC 700601 / ES114) (Vibrio fischeri).